Consider the following 235-residue polypeptide: Large ribosomal subunit protein uL1 (235 aa).

This sequence belongs to the universal ribosomal protein uL1 family. In terms of assembly, part of the 50S ribosomal subunit.

Functionally, binds directly to 23S rRNA. The L1 stalk is quite mobile in the ribosome, and is involved in E site tRNA release. Protein L1 is also a translational repressor protein, it controls the translation of the L11 operon by binding to its mRNA. The chain is Large ribosomal subunit protein uL1 from Prochlorococcus marinus (strain NATL1A).